A 149-amino-acid chain; its full sequence is Large ribosomal subunit protein bL9 (149 aa).

It belongs to the bacterial ribosomal protein bL9 family.

In terms of biological role, binds to the 23S rRNA. The polypeptide is Large ribosomal subunit protein bL9 (Rubrobacter xylanophilus (strain DSM 9941 / JCM 11954 / NBRC 16129 / PRD-1)).